The following is a 659-amino-acid chain: Protein phosphatase Slingshot homolog 3 (659 aa).

Positions Met-1–Ser-16 are enriched in polar residues. Residues Met-1–Arg-31 are disordered. Ala-2 is subject to N-acetylalanine. Ser-9 and Ser-37 each carry phosphoserine. Residues Leu-46–Gln-96 form a disordered region. A compositionally biased stretch (basic and acidic residues) spans Pro-64–Gln-78. Positions Asp-80–Gln-89 are enriched in polar residues. Phosphoserine occurs at positions 85 and 87. Residues Glu-269–Ala-324 form the DEK-C domain. Positions Arg-328 to Ala-469 constitute a Tyrosine-protein phosphatase domain. The active-site Phosphocysteine intermediate is the Cys-413. 3 disordered regions span residues Gly-482–Leu-534, Ser-547–Val-603, and Gln-617–Thr-638. Residues Ser-547–Ser-557 are compositionally biased toward low complexity.

This sequence belongs to the protein-tyrosine phosphatase family. In terms of assembly, does not bind to, or colocalize with, filamentous actin.

The protein resides in the cytoplasm. It is found in the cytoskeleton. It localises to the nucleus. The enzyme catalyses O-phospho-L-tyrosyl-[protein] + H2O = L-tyrosyl-[protein] + phosphate. The catalysed reaction is O-phospho-L-seryl-[protein] + H2O = L-seryl-[protein] + phosphate. It catalyses the reaction O-phospho-L-threonyl-[protein] + H2O = L-threonyl-[protein] + phosphate. Its function is as follows. Protein phosphatase which may play a role in the regulation of actin filament dynamics. Can dephosphorylate and activate the actin binding/depolymerizing factor cofilin, which subsequently binds to actin filaments and stimulates their disassembly. This Homo sapiens (Human) protein is Protein phosphatase Slingshot homolog 3 (SSH3).